A 339-amino-acid polypeptide reads, in one-letter code: Retinol dehydrogenase 10-A (339 aa).

A helical; Signal-anchor membrane pass occupies residues 3-23; sequence IFVEFFLVMLKVCWAIVMAGF. Position 40 to 64 (40 to 64) interacts with NADP(+); the sequence is VITGAGGGLGRLFAKEFARRRATLV. Residue S195 participates in substrate binding. The active-site Proton acceptor is the Y208.

The protein belongs to the short-chain dehydrogenases/reductases (SDR) family.

Its subcellular location is the microsome membrane. The protein localises to the endoplasmic reticulum membrane. It catalyses the reaction all-trans-retinol + NADP(+) = all-trans-retinal + NADPH + H(+). It functions in the pathway cofactor metabolism; retinol metabolism. Retinol dehydrogenase with a clear preference for NADP. Converts all-trans-retinol to all-trans-retinal. Has no detectable activity towards 11-cis-retinol, 9-cis-retinol and 13-cis-retinol. The protein is Retinol dehydrogenase 10-A (rdh10a) of Danio rerio (Zebrafish).